The sequence spans 92 residues: Sec-independent protein translocase protein TatA (92 aa).

Residues 1-21 form a helical membrane-spanning segment; sequence MGIFDWKHWIVILVVVVLVFG. The disordered stretch occupies residues 43–92; sequence MNDDEKPADPTVTPAQPVPPVQPQATAQANPPHTIDVQAQKVEEPIRKDV. Residues 65–74 are compositionally biased toward low complexity; the sequence is PQATAQANPP. Basic and acidic residues predominate over residues 83-92; sequence KVEEPIRKDV.

It belongs to the TatA/E family. In terms of assembly, the Tat system comprises two distinct complexes: a TatABC complex, containing multiple copies of TatA, TatB and TatC subunits, and a separate TatA complex, containing only TatA subunits. Substrates initially bind to the TatABC complex, which probably triggers association of the separate TatA complex to form the active translocon.

It localises to the cell inner membrane. In terms of biological role, part of the twin-arginine translocation (Tat) system that transports large folded proteins containing a characteristic twin-arginine motif in their signal peptide across membranes. TatA could form the protein-conducting channel of the Tat system. The polypeptide is Sec-independent protein translocase protein TatA (Pseudomonas fluorescens (strain Pf0-1)).